The following is a 385-amino-acid chain: Centrosomal protein of 44 kDa (385 aa).

The interval 11–192 is binds with microtubules and centrioles; that stretch reads RNLEQVLRSL…GANIPEDTVT (182 aa). The interval 126-154 is disordered; that stretch reads LEKTPSQQRKKTSSAKSEPCSSTEKTSTE. The segment covering 139–154 has biased composition (polar residues); that stretch reads SAKSEPCSSTEKTSTE. The stretch at 230–271 forms a coiled coil; the sequence is EVTALQSMLAECQEKLKKLTCIESRLESLEEKMKGKVLVNEK. Positions 303–348 are disordered; it reads SEDYSSSSDMDSLNPDRKSKEERHANIPLSSGYSTVSSDSTPRTST. Residues 305–314 show a composition bias toward low complexity; it reads DYSSSSDMDS. Basic and acidic residues predominate over residues 316 to 327; the sequence is NPDRKSKEERHA. Low complexity predominate over residues 332 to 342; the sequence is SSGYSTVSSDS. Serine 342 carries the phosphoserine modification. Threonine 343 carries the phosphothreonine modification. Positions 358-381 form a coiled coil; sequence SEETTMQKMERMKKMFEETAELLK.

As to quaternary structure, interacts with CROCC. Interacts with POC1B; the interaction is direct and recruits POC1B to centriolar microtubules. Binds to centriolar microtubules.

It localises to the cytoplasm. The protein localises to the cytoskeleton. Its subcellular location is the microtubule organizing center. The protein resides in the centrosome. It is found in the centriole. It localises to the spindle pole. The protein localises to the midbody. In terms of biological role, centriole-enriched microtubule-binding protein involved in centriole biogenesis. In collaboration with CEP295 and POC1B, is required for the centriole-to-centrosome conversion by ensuring the formation of bona fide centriole wall. Functions as a linker component that maintains centrosome cohesion. Associates with CROCC and regulates its stability and localization to the centrosome. This Bos taurus (Bovine) protein is Centrosomal protein of 44 kDa (CEP44).